Here is a 522-residue protein sequence, read N- to C-terminus: Sorting nexin-1 (522 aa).

The interval 1 to 142 is disordered; sequence MASGGGGCSA…ELEEEEQEDQ (142 aa). Phosphoserine is present on residues serine 32 and serine 39. A compositionally biased stretch (acidic residues) spans 35-45; that stretch reads EAGDSDTEGED. Phosphothreonine is present on residues threonine 41 and threonine 48. Positions 55–65 are enriched in polar residues; it reads KPQSPKKTTSL. Serine 58 and serine 72 each carry phosphoserine. A compositionally biased stretch (basic and acidic residues) spans 71–80; it reads GSKENGIHEE. The span at 98–107 shows a compositional bias: polar residues; the sequence is LDSTQNNQKT. Residues 132-142 are compositionally biased toward acidic residues; sequence EELEEEEQEDQ. One can recognise a PX domain in the interval 143-272; it reads FDLTVGITDP…EFLEKEELPR (130 aa). Residues arginine 186, serine 188, and lysine 214 each contribute to the a 1,2-diacyl-sn-glycero-3-phospho-(1D-myo-inositol-3-phosphate) site. The residue at position 188 (serine 188) is a Phosphoserine. The residue at position 237 (lysine 237) is an N6-acetyllysine. Arginine 238 serves as a coordination point for a 1,2-diacyl-sn-glycero-3-phospho-(1D-myo-inositol-3-phosphate). At serine 280 the chain carries Phosphoserine. The membrane-binding amphipathic helix stretch occupies residues 281–298; that stretch reads GAGLLKMFNKATDAVSKM. The 221-residue stretch at 302–522 folds into the BAR domain; sequence MNESDIWFEE…AFLPEARAIS (221 aa).

It belongs to the sorting nexin family. In terms of assembly, predominantly forms heterodimers with BAR domain-containing sorting nexins SNX5, SNX6 and SNX32; can self-associate to form homodimers. The heterodimers are proposed to self-assemble into helical arrays on the membrane to stabilize and expand local membrane curvature underlying endosomal tubule formation. Thought to be a component of the originally described retromer complex (also called SNX-BAR retromer) which is a pentamer containing the heterotrimeric retromer cargo-selective complex (CSC), also described as vacuolar protein sorting subcomplex (VPS) and a heterodimeric membrane-deforming subcomplex formed between SNX1 or SNX2 and SNX5 or SNX6 (also called SNX-BAR subcomplex); the respective CSC and SNX-BAR subcomplexes associate with low affinity. Interacts with SNX5, SNX6, SNX32, VPS26A, VPS29, VPS35, DRD5, DENND5A, KALRN, RHOG (GDP-bound form). The interaction with SNX2 is reported controversially. Interacts with DNAJC13; prevented by presence of HGS. Interacts with HGS.

Its subcellular location is the endosome membrane. It is found in the golgi apparatus. The protein resides in the trans-Golgi network membrane. It localises to the early endosome membrane. The protein localises to the cell projection. Its subcellular location is the lamellipodium. Involved in several stages of intracellular trafficking. Interacts with membranes containing phosphatidylinositol 3-phosphate (PtdIns(3P)) or phosphatidylinositol 3,5-bisphosphate (PtdIns(3,5)P2). Acts in part as component of the retromer membrane-deforming SNX-BAR subcomplex. The SNX-BAR retromer mediates retrograde transport of cargo proteins from endosomes to the trans-Golgi network (TGN) and is involved in endosome-to-plasma membrane transport for cargo protein recycling. The SNX-BAR subcomplex functions to deform the donor membrane into a tubular profile called endosome-to-TGN transport carrier (ETC). Can sense membrane curvature and has in vitro vesicle-to-membrane remodeling activity. Involved in retrograde endosome-to-TGN transport of lysosomal enzyme receptors (IGF2R, M6PR and SORT1). Plays a role in targeting ligand-activated EGFR to the lysosomes for degradation after endocytosis from the cell surface and release from the Golgi. Involvement in retromer-independent endocytic trafficking of P2RY1 and lysosomal degradation of protease-activated receptor-1/F2R. Promotes KALRN- and RHOG-dependent but retromer-independent membrane remodeling such as lamellipodium formation; the function is dependent on GEF activity of KALRN. Required for endocytosis of DRD5 upon agonist stimulation but not for basal receptor trafficking. The polypeptide is Sorting nexin-1 (Snx1) (Rattus norvegicus (Rat)).